Consider the following 444-residue polypeptide: Glutamyl-tRNA reductase (444 aa).

Residues 41 to 44 (TCNR), S102, 107 to 109 (ERE), and Q113 each bind substrate. C42 functions as the Nucleophile in the catalytic mechanism. Residue 181 to 186 (GTGSYA) participates in NADP(+) binding.

Belongs to the glutamyl-tRNA reductase family. Homodimer.

The enzyme catalyses (S)-4-amino-5-oxopentanoate + tRNA(Glu) + NADP(+) = L-glutamyl-tRNA(Glu) + NADPH + H(+). The protein operates within porphyrin-containing compound metabolism; protoporphyrin-IX biosynthesis; 5-aminolevulinate from L-glutamyl-tRNA(Glu): step 1/2. In terms of biological role, catalyzes the NADPH-dependent reduction of glutamyl-tRNA(Glu) to glutamate 1-semialdehyde (GSA). The protein is Glutamyl-tRNA reductase of Cutibacterium acnes (strain DSM 16379 / KPA171202) (Propionibacterium acnes).